Consider the following 460-residue polypeptide: Probable Xaa-Pro aminopeptidase VDBG_02538 (460 aa).

Residues Asp256, Asp267, Glu390, and Glu430 each contribute to the Mn(2+) site.

Belongs to the peptidase M24B family. It depends on Mn(2+) as a cofactor.

The catalysed reaction is Release of any N-terminal amino acid, including proline, that is linked to proline, even from a dipeptide or tripeptide.. Catalyzes the removal of a penultimate prolyl residue from the N-termini of peptides. This chain is Probable Xaa-Pro aminopeptidase VDBG_02538, found in Verticillium alfalfae (strain VaMs.102 / ATCC MYA-4576 / FGSC 10136) (Verticillium wilt of alfalfa).